The chain runs to 154 residues: Myoglobin (154 aa).

The Globin domain maps to 2-148; sequence VLSDAEWHLV…FRKDIAAKYK (147 aa). Ser-4 is modified (phosphoserine). Nitrite is bound at residue His-65. His-65 contacts O2. At Thr-68 the chain carries Phosphothreonine. Residue His-94 coordinates heme b.

The protein belongs to the globin family. In terms of assembly, monomeric.

The protein localises to the cytoplasm. The protein resides in the sarcoplasm. It catalyses the reaction Fe(III)-heme b-[protein] + nitric oxide + H2O = Fe(II)-heme b-[protein] + nitrite + 2 H(+). The enzyme catalyses H2O2 + AH2 = A + 2 H2O. Monomeric heme protein which primary function is to store oxygen and facilitate its diffusion within muscle tissues. Reversibly binds oxygen through a pentacoordinated heme iron and enables its timely and efficient release as needed during periods of heightened demand. Depending on the oxidative conditions of tissues and cells, and in addition to its ability to bind oxygen, it also has a nitrite reductase activity whereby it regulates the production of bioactive nitric oxide. Under stress conditions, like hypoxia and anoxia, it also protects cells against reactive oxygen species thanks to its pseudoperoxidase activity. This is Myoglobin (MB) from Balaenoptera acutorostrata (Common minke whale).